A 286-amino-acid chain; its full sequence is ATP synthase gamma chain (286 aa).

This sequence belongs to the ATPase gamma chain family. In terms of assembly, F-type ATPases have 2 components, CF(1) - the catalytic core - and CF(0) - the membrane proton channel. CF(1) has five subunits: alpha(3), beta(3), gamma(1), delta(1), epsilon(1). CF(0) has three main subunits: a, b and c.

The protein localises to the cell inner membrane. Its function is as follows. Produces ATP from ADP in the presence of a proton gradient across the membrane. The gamma chain is believed to be important in regulating ATPase activity and the flow of protons through the CF(0) complex. The polypeptide is ATP synthase gamma chain (Pseudomonas putida (strain GB-1)).